The sequence spans 248 residues: 1-(5-phosphoribosyl)-5-[(5-phosphoribosylamino)methylideneamino] imidazole-4-carboxamide isomerase (248 aa).

Catalysis depends on Asp8, which acts as the Proton acceptor. The active-site Proton donor is Asp131.

The protein belongs to the HisA/HisF family.

The protein localises to the cytoplasm. The catalysed reaction is 1-(5-phospho-beta-D-ribosyl)-5-[(5-phospho-beta-D-ribosylamino)methylideneamino]imidazole-4-carboxamide = 5-[(5-phospho-1-deoxy-D-ribulos-1-ylimino)methylamino]-1-(5-phospho-beta-D-ribosyl)imidazole-4-carboxamide. Its pathway is amino-acid biosynthesis; L-histidine biosynthesis; L-histidine from 5-phospho-alpha-D-ribose 1-diphosphate: step 4/9. This chain is 1-(5-phosphoribosyl)-5-[(5-phosphoribosylamino)methylideneamino] imidazole-4-carboxamide isomerase, found in Cupriavidus taiwanensis (strain DSM 17343 / BCRC 17206 / CCUG 44338 / CIP 107171 / LMG 19424 / R1) (Ralstonia taiwanensis (strain LMG 19424)).